Reading from the N-terminus, the 271-residue chain is Chorismate dehydratase (271 aa).

The protein belongs to the MqnA/MqnD family. MqnA subfamily.

It carries out the reaction chorismate = 3-[(1-carboxyvinyl)-oxy]benzoate + H2O. The protein operates within quinol/quinone metabolism; menaquinone biosynthesis. Catalyzes the dehydration of chorismate into 3-[(1-carboxyvinyl)oxy]benzoate, a step in the biosynthesis of menaquinone (MK, vitamin K2). This Thermus thermophilus (strain ATCC 27634 / DSM 579 / HB8) protein is Chorismate dehydratase.